An 83-amino-acid chain; its full sequence is ATP synthase subunit c, chloroplastic (83 aa).

Helical transmembrane passes span 4-24 and 57-77; these read IISAASVIAAGLAVGLAAIGP and LAFMEALTIYGLVVALSLLFA.

The protein belongs to the ATPase C chain family. F-type ATPases have 2 components, F(1) - the catalytic core - and F(0) - the membrane proton channel. F(1) has five subunits: alpha(3), beta(3), gamma(1), delta(1), epsilon(1). F(0) has four main subunits: a(1), b(1), b'(1) and c(10-14). The alpha and beta chains form an alternating ring which encloses part of the gamma chain. F(1) is attached to F(0) by a central stalk formed by the gamma and epsilon chains, while a peripheral stalk is formed by the delta, b and b' chains.

The protein localises to the plastid. It localises to the chloroplast thylakoid membrane. Its function is as follows. F(1)F(0) ATP synthase produces ATP from ADP in the presence of a proton or sodium gradient. F-type ATPases consist of two structural domains, F(1) containing the extramembraneous catalytic core and F(0) containing the membrane proton channel, linked together by a central stalk and a peripheral stalk. During catalysis, ATP synthesis in the catalytic domain of F(1) is coupled via a rotary mechanism of the central stalk subunits to proton translocation. In terms of biological role, key component of the F(0) channel; it plays a direct role in translocation across the membrane. A homomeric c-ring of between 10-14 subunits forms the central stalk rotor element with the F(1) delta and epsilon subunits. This chain is ATP synthase subunit c, chloroplastic, found in Galdieria sulphuraria (Red alga).